A 586-amino-acid polypeptide reads, in one-letter code: Estrogen receptor (586 aa).

A modulating region spans residues methionine 1–tyrosine 179. The tract at residues phenylalanine 144–serine 173 is disordered. Positions serine 149 to methionine 160 are enriched in basic and acidic residues. NR C4-type zinc fingers lie at residues cysteine 180–cysteine 200 and cysteine 216–cysteine 240. The segment at residues cysteine 180–methionine 245 is a DNA-binding region (nuclear receptor). Residues methionine 246 to leucine 302 are hinge. Residues lysine 252–arginine 264 show a composition bias toward basic residues. Residues lysine 252 to aspartate 276 are disordered. Residues glutamine 265–aspartate 276 show a composition bias toward basic and acidic residues. In terms of domain architecture, NR LBD spans threonine 303–histidine 539. A compositionally biased stretch (basic and acidic residues) spans threonine 543–arginine 556. Positions threonine 543 to cysteine 569 are disordered.

This sequence belongs to the nuclear hormone receptor family. NR3 subfamily. As to quaternary structure, binds DNA as a homodimer. Can form a heterodimer with ER-beta.

It localises to the nucleus. Functionally, the steroid hormones and their receptors are involved in the regulation of eukaryotic gene expression and affect cellular proliferation and differentiation in target tissues. The polypeptide is Estrogen receptor (esr1) (Xenopus laevis (African clawed frog)).